The primary structure comprises 954 residues: Kinesin-like protein KIN-14Q (954 aa).

Positions 33-155 constitute a Calponin-homology (CH) domain; the sequence is AMRRYDAASW…CVLALKSFSE (123 aa). In terms of domain architecture, Kinesin motor spans 374 to 699; sequence NIRVYCRVRP…LKFAERVASV (326 aa). 457-464 serves as a coordination point for ATP; that stretch reads GQTGSGKT. Residues 704-733 adopt a coiled-coil conformation; sequence AKANKEGSEVRELKEQIATLKAALAKKEGE. Basic and acidic residues predominate over residues 844-855; it reads YDPDKQRRRAEP. Disordered regions lie at residues 844–876 and 912–954; these read YDPD…DQEM and PNLA…NTPK. Positions 864 to 873 are enriched in low complexity; that stretch reads FDAATSSPSD. Over residues 928-954 the composition is skewed to polar residues; sequence PIRNSKQLPFSTTGGRRTRNGKINTPK.

Belongs to the TRAFAC class myosin-kinesin ATPase superfamily. Kinesin family. KIN-14 subfamily. In terms of assembly, forms oligomers in vitro. Interacts with actin microfilaments. Binds to actin in vitro through its calponin-homology (CH) domain. In terms of tissue distribution, expressed in primary leaf, primary root, developing flower and coleoptile.

Its subcellular location is the cytoplasm. It is found in the cytoskeleton. Its activity is regulated as follows. The microtubule-dependent ATPase activity is regulated by actin binding. In terms of biological role, minus end-directed motor protein that transports actin filaments along microtubules. Plays a central role in the polar orientation of actin filaments along microtubules, and thus a contribution to the organization of the cytoskeletal architecture. Links the actin microfilaments with the cortical microtubules in both cycling and non-cycling cells. Required for efficient cell elongation by its participation in the premitotic nuclear positioning. The chain is Kinesin-like protein KIN-14Q from Oryza sativa subsp. japonica (Rice).